We begin with the raw amino-acid sequence, 886 residues long: DNA gyrase subunit A (886 aa).

The Topo IIA-type catalytic domain occupies 35–501 (LPDVRDGLKP…GFEDLEDEDL (467 aa)). Tyrosine 123 serves as the catalytic O-(5'-phospho-DNA)-tyrosine intermediate. A GyrA-box motif is present at residues 528–534 (QNRGGRG). Positions 810-860 (VKEDADEENEDEQSTVSEDGTEQQREAVVNDETPGNAIHTEVIDSEVNDED) are disordered. Over residues 813–822 (DADEENEDEQ) the composition is skewed to acidic residues.

Belongs to the type II topoisomerase GyrA/ParC subunit family. In terms of assembly, heterotetramer, composed of two GyrA and two GyrB chains. In the heterotetramer, GyrA contains the active site tyrosine that forms a transient covalent intermediate with DNA, while GyrB binds cofactors and catalyzes ATP hydrolysis.

The protein localises to the cytoplasm. The enzyme catalyses ATP-dependent breakage, passage and rejoining of double-stranded DNA.. A type II topoisomerase that negatively supercoils closed circular double-stranded (ds) DNA in an ATP-dependent manner to modulate DNA topology and maintain chromosomes in an underwound state. Negative supercoiling favors strand separation, and DNA replication, transcription, recombination and repair, all of which involve strand separation. Also able to catalyze the interconversion of other topological isomers of dsDNA rings, including catenanes and knotted rings. Type II topoisomerases break and join 2 DNA strands simultaneously in an ATP-dependent manner. In Staphylococcus aureus (strain MRSA252), this protein is DNA gyrase subunit A.